The primary structure comprises 206 residues: Small ribosomal subunit protein uS4 (206 aa).

In terms of domain architecture, S4 RNA-binding spans 96–157 (SRLDNVVYRM…KAKNQARIQN (62 aa)).

This sequence belongs to the universal ribosomal protein uS4 family. In terms of assembly, part of the 30S ribosomal subunit. Contacts protein S5. The interaction surface between S4 and S5 is involved in control of translational fidelity.

In terms of biological role, one of the primary rRNA binding proteins, it binds directly to 16S rRNA where it nucleates assembly of the body of the 30S subunit. Its function is as follows. With S5 and S12 plays an important role in translational accuracy. The polypeptide is Small ribosomal subunit protein uS4 (Chromohalobacter salexigens (strain ATCC BAA-138 / DSM 3043 / CIP 106854 / NCIMB 13768 / 1H11)).